We begin with the raw amino-acid sequence, 502 residues long: Bone morphogenetic protein receptor type-1B (502 aa).

The signal sequence occupies residues 1–13 (MLLRSAGKLNVGT). The disordered stretch occupies residues 1 to 25 (MLLRSAGKLNVGTKKEDGESTAPTP). Over 14-126 (KKEDGESTAP…DFVDGPIHHR (113 aa)) the chain is Extracellular. Cystine bridges form between Cys32–Cys53, Cys34–Cys38, Cys47–Cys71, Cys81–Cys95, and Cys96–Cys102. The chain crosses the membrane as a helical span at residues 127-148 (ALLISVTVCSLLLVLIILFCYF). The Cytoplasmic portion of the chain corresponds to 149 to 502 (RYKRQETRPR…KMSESQDIKL (354 aa)). The GS domain occupies 174–203 (ESLRDLIEQSQSSGSGSGLPLLVQRTIAKQ). The Protein kinase domain occupies 204-494 (IQMVKQIGKG…LRVKKTLAKM (291 aa)). ATP is bound by residues 210–218 (IGKGRYGEV) and Lys231. Asp332 acts as the Proton acceptor in catalysis.

The protein belongs to the protein kinase superfamily. TKL Ser/Thr protein kinase family. TGFB receptor subfamily. As to quaternary structure, interacts with high affinity with GDF5; positively regulates chondrocyte differentiation. Interacts with SCUBE3. Interacts with TSC22D1/TSC-22. Interacts with TGFBR3. The cofactor is Mg(2+). Requires Mn(2+) as cofactor. In terms of processing, autophosphorylated.

The protein localises to the cell membrane. The enzyme catalyses L-threonyl-[receptor-protein] + ATP = O-phospho-L-threonyl-[receptor-protein] + ADP + H(+). The catalysed reaction is L-seryl-[receptor-protein] + ATP = O-phospho-L-seryl-[receptor-protein] + ADP + H(+). Its function is as follows. On ligand binding, forms a receptor complex consisting of two type II and two type I transmembrane serine/threonine kinases. Type II receptors phosphorylate and activate type I receptors which autophosphorylate, then bind and activate SMAD transcriptional regulators. Receptor for BMP7/OP-1 and GDF5. Positively regulates chondrocyte differentiation through GDF5 interaction. This chain is Bone morphogenetic protein receptor type-1B (BMPR1B), found in Homo sapiens (Human).